We begin with the raw amino-acid sequence, 569 residues long: Dihydroxy-acid dehydratase (569 aa).

Residue Asp-80 participates in Mg(2+) binding. Residue Cys-121 coordinates [2Fe-2S] cluster. Residues Asp-122 and Lys-123 each coordinate Mg(2+). N6-carboxylysine is present on Lys-123. Cys-194 contacts [2Fe-2S] cluster. A Mg(2+)-binding site is contributed by Glu-446. Catalysis depends on Ser-472, which acts as the Proton acceptor.

The protein belongs to the IlvD/Edd family. Homodimer. It depends on [2Fe-2S] cluster as a cofactor. Mg(2+) serves as cofactor.

It carries out the reaction (2R)-2,3-dihydroxy-3-methylbutanoate = 3-methyl-2-oxobutanoate + H2O. It catalyses the reaction (2R,3R)-2,3-dihydroxy-3-methylpentanoate = (S)-3-methyl-2-oxopentanoate + H2O. The protein operates within amino-acid biosynthesis; L-isoleucine biosynthesis; L-isoleucine from 2-oxobutanoate: step 3/4. Its pathway is amino-acid biosynthesis; L-valine biosynthesis; L-valine from pyruvate: step 3/4. Its function is as follows. Functions in the biosynthesis of branched-chain amino acids. Catalyzes the dehydration of (2R,3R)-2,3-dihydroxy-3-methylpentanoate (2,3-dihydroxy-3-methylvalerate) into 2-oxo-3-methylpentanoate (2-oxo-3-methylvalerate) and of (2R)-2,3-dihydroxy-3-methylbutanoate (2,3-dihydroxyisovalerate) into 2-oxo-3-methylbutanoate (2-oxoisovalerate), the penultimate precursor to L-isoleucine and L-valine, respectively. This chain is Dihydroxy-acid dehydratase, found in Desulforudis audaxviator (strain MP104C).